A 132-amino-acid polypeptide reads, in one-letter code: Small ribosomal subunit protein uS8 (132 aa).

This sequence belongs to the universal ribosomal protein uS8 family. Part of the 30S ribosomal subunit. Contacts proteins S5 and S12.

Functionally, one of the primary rRNA binding proteins, it binds directly to 16S rRNA central domain where it helps coordinate assembly of the platform of the 30S subunit. The protein is Small ribosomal subunit protein uS8 of Syntrophomonas wolfei subsp. wolfei (strain DSM 2245B / Goettingen).